Reading from the N-terminus, the 103-residue chain is Cell division protein FtsB (103 aa).

Topologically, residues 1-3 (MGK) are cytoplasmic. A helical membrane pass occupies residues 4–21 (LTLLLLAILVWLQYSLWF). At 22 to 103 (GKNGIHDYTR…RAQSAGQNNR (82 aa)) the chain is on the periplasmic side. A coiled-coil region spans residues 31–71 (RVNDDVAAQQATNAKLKARNDQLFAEIDDLNGGQEALEERA).

The protein belongs to the FtsB family. Part of a complex composed of FtsB, FtsL and FtsQ.

Its subcellular location is the cell inner membrane. Essential cell division protein. May link together the upstream cell division proteins, which are predominantly cytoplasmic, with the downstream cell division proteins, which are predominantly periplasmic. The polypeptide is Cell division protein FtsB (Shigella boydii serotype 18 (strain CDC 3083-94 / BS512)).